The primary structure comprises 252 residues: RNA-binding protein 7 (252 aa).

Residues 9–86 (RTLFVGNLDP…RQLNIKFKTG (78 aa)) enclose the RRM domain. 2 stretches are compositionally biased toward polar residues: residues 88-107 (SHINQEGKSPANSQNPSPAN) and 119-137 (QMGSPSYSPPQHMQRPFSS). Disordered stretches follow at residues 88-137 (SHIN…PFSS) and 171-252 (QLRG…WKHF). Composition is skewed to basic and acidic residues over residues 211 to 230 (ERNRRDGQRGDFYHHDDRSG) and 237 to 252 (PPDRRRDSREGRWKHF).

In terms of assembly, component of the nuclear exosome targeting (NEXT) complex composed of MTREX, ZCCHC8, and RBM7 that directs a subset of non-coding short-lived RNAs for exosomal degradation.

Its subcellular location is the nucleus. It is found in the nucleoplasm. Functionally, RNA-binding subunit of the trimeric nuclear exosome targeting (NEXT) complex, a complex that functions as an RNA exosome cofactor that directs a subset of non-coding short-lived RNAs for exosomal degradation. NEXT is involved in surveillance and turnover of aberrant transcripts and non-coding RNAs. Binds preferentially polyuridine sequences and associates with newly synthesized RNAs, including pre-mRNAs and short-lived exosome substrates such as promoter upstream transcripts (PROMPTs), enhancer RNAs (eRNAs), and 3'-extended products from small nuclear RNAs (snRNAs). The polypeptide is RNA-binding protein 7 (Danio rerio (Zebrafish)).